Consider the following 340-residue polypeptide: Ephrin-B3 (340 aa).

The N-terminal stretch at 1-27 (MGPPHSGPGGVRVGALLLLGVLGLVSG) is a signal peptide. Positions 28 to 167 (LSLEPVYWNS…TRGMKVLLRV (140 aa)) constitute an Ephrin RBD domain. Over 28-226 (LSLEPVYWNS…EGPLPPPSMP (199 aa)) the chain is Extracellular. Cystine bridges form between Cys-62/Cys-104 and Cys-92/Cys-156. Residues 168–225 (GQSPRGGAVPRKPVSEMPMERDRGAAHSLEPGKENLPGDPTSNATSRGAEGPLPPPSM) are disordered. The span at 185 to 200 (PMERDRGAAHSLEPGK) shows a compositional bias: basic and acidic residues. Asn-210 carries N-linked (GlcNAc...) asparagine glycosylation. Residues 227-247 (AVAGAAGGLALLLLGVAGAGG) form a helical membrane-spanning segment. The Cytoplasmic portion of the chain corresponds to 248-340 (AMCWRRRRAK…QSPPNIYYKV (93 aa)). The segment at 254-298 (RRAKPSESRHPGPGSFGRGGSLGLGGGGGMGPREAEPGELGIALR) is disordered. The segment covering 267–284 (GSFGRGGSLGLGGGGGMG) has biased composition (gly residues). The residue at position 271 (Arg-271) is an Omega-N-methylarginine. Ser-274 carries the post-translational modification Phosphoserine. The short motif at 338–340 (YKV) is the PDZ-binding element.

This sequence belongs to the ephrin family. As to quaternary structure, interacts with GRIP1 and GRIP2. (Microbial infection) Interacts with nipah virus and hendra virus glycoprotein. Highly expressed in brain; expressed in embryonic floor plate, roof plate and hindbrain segments.

It localises to the membrane. In terms of biological role, cell surface transmembrane ligand for Eph receptors, a family of receptor tyrosine kinases which are crucial for migration, repulsion and adhesion during neuronal, vascular and epithelial development. Binds promiscuously Eph receptors residing on adjacent cells, leading to contact-dependent bidirectional signaling into neighboring cells. The signaling pathway downstream of the receptor is referred to as forward signaling while the signaling pathway downstream of the ephrin ligand is referred to as reverse signaling. May play a pivotal role in forebrain function. Binds to, and induce the collapse of, commissural axons/growth cones in vitro. May play a role in constraining the orientation of longitudinally projecting axons. (Microbial infection) Acts as a receptor for nipah virus and hendra virus. The polypeptide is Ephrin-B3 (EFNB3) (Homo sapiens (Human)).